Consider the following 1333-residue polypeptide: DNA-directed RNA polymerase subunit beta' (1333 aa).

Zn(2+) is bound by residues cysteine 60, cysteine 62, cysteine 75, and cysteine 78. Residues aspartate 535, aspartate 537, and aspartate 539 each coordinate Mg(2+). Residues cysteine 901, cysteine 983, cysteine 990, and cysteine 993 each contribute to the Zn(2+) site.

It belongs to the RNA polymerase beta' chain family. As to quaternary structure, the RNAP catalytic core consists of 2 alpha, 1 beta, 1 beta' and 1 omega subunit. When a sigma factor is associated with the core the holoenzyme is formed, which can initiate transcription. Mg(2+) serves as cofactor. The cofactor is Zn(2+).

The catalysed reaction is RNA(n) + a ribonucleoside 5'-triphosphate = RNA(n+1) + diphosphate. Its function is as follows. DNA-dependent RNA polymerase catalyzes the transcription of DNA into RNA using the four ribonucleoside triphosphates as substrates. The sequence is that of DNA-directed RNA polymerase subunit beta' from Corynebacterium efficiens (strain DSM 44549 / YS-314 / AJ 12310 / JCM 11189 / NBRC 100395).